A 334-amino-acid chain; its full sequence is Cytoskeleton protein RodZ (334 aa).

Topologically, residues 1–111 (MNTEATHDQN…LGKRRKKRDG (111 aa)) are cytoplasmic. In terms of domain architecture, HTH cro/C1-type spans 19–71 (LRNAREQLGLSQQAVAERLCLKVSTVRDIEEDKAPSDLASTFLRGYIRSYARL). Positions 30–49 (QQAVAERLCLKVSTVRDIEE) form a DNA-binding region, H-T-H motif. The chain crosses the membrane as a helical; Signal-anchor for type II membrane protein span at residues 112 to 132 (WLMSFTWLVLFVVVGLTGAWW). Topologically, residues 133-334 (WQNHKAQQEE…TLNAEPTPAQ (202 aa)) are periplasmic. The tract at residues 155-241 (NADKDSGQSV…PSALPTSQAG (87 aa)) is disordered. Residues 161 to 175 (GQSVPLDTGAVTSQD) show a composition bias toward polar residues. 2 stretches are compositionally biased toward low complexity: residues 176 to 211 (TTPAQTAPAPATPVDSTAATQTPAPTAAATQNTVVA) and 219 to 241 (TAATSAAPAATETPSALPTSQAG).

Belongs to the RodZ family.

It is found in the cell inner membrane. In terms of biological role, cytoskeletal protein that is involved in cell-shape control through regulation of the length of the long axis. The protein is Cytoskeleton protein RodZ of Salmonella dublin (strain CT_02021853).